Here is a 206-residue protein sequence, read N- to C-terminus: Ion-translocating oxidoreductase complex subunit G (206 aa).

A helical transmembrane segment spans residues 9–29 (GITLALFAAGSTGLTAAINQM). The residue at position 174 (Thr174) is an FMN phosphoryl threonine.

Belongs to the RnfG family. As to quaternary structure, the complex is composed of six subunits: RsxA, RsxB, RsxC, RsxD, RsxE and RsxG. Requires FMN as cofactor.

The protein localises to the cell inner membrane. Its function is as follows. Part of a membrane-bound complex that couples electron transfer with translocation of ions across the membrane. Required to maintain the reduced state of SoxR. Probably transfers electron from NAD(P)H to SoxR. The protein is Ion-translocating oxidoreductase complex subunit G of Escherichia coli (strain K12).